The primary structure comprises 352 residues: Rhodopsin (352 aa).

The Extracellular segment spans residues 1–36 (MNGTEGPYFYVPMSNATGVVRSPYEYPQYYLAPPWA). N-linked (GlcNAc...) asparagine glycans are attached at residues Asn2 and Asn15. Residues 37-61 (YACLAAYMFFLILVGFPVNFLTLYV) traverse the membrane as a helical segment. Topologically, residues 62–73 (TIEHKKLRTPLN) are cytoplasmic. A helical membrane pass occupies residues 74 to 96 (YILLNLAVADLFMVFGGFTTTMY). The Extracellular portion of the chain corresponds to 97 to 110 (TSLNGYFVFGRLGC). A disulfide bridge connects residues Cys110 and Cys187. A helical membrane pass occupies residues 111 to 133 (NLEGFFATFGGINSLWCLVVLSI). The 'Ionic lock' involved in activated form stabilization motif lies at 134-136 (ERW). The Cytoplasmic segment spans residues 134–152 (ERWVVVCKPMSNFRFGENH). A helical transmembrane segment spans residues 153 to 173 (AIMGVAFTWFMALACTVPPLV). At 174-202 (GWSRYIPEGMQCSCGIDYYTRAEGFNNES) the chain is on the extracellular side. The chain crosses the membrane as a helical span at residues 203–224 (FVIYMFVVHFLTPLFVITFCYG). Residues 225 to 252 (RLVCTVKEAAAQQQESETTQRAEREVTR) are Cytoplasmic-facing. A helical membrane pass occupies residues 253-274 (MVILMFIAYLVCWLPYASVSWW). Residues 275–286 (IFTNQGSEFGPI) are Extracellular-facing. Residues 287 to 308 (FMTVPAFFAKSSSIYNPVIYIC) traverse the membrane as a helical segment. Lys296 is modified (N6-(retinylidene)lysine). Topologically, residues 309–352 (LNKQFRHCMITTLCCGKNPFEEEEGASTTASKTEASSVSSVSPA) are cytoplasmic. 2 S-palmitoyl cysteine lipidation sites follow: Cys322 and Cys323. The interval 331–352 (EEGASTTASKTEASSVSSVSPA) is disordered. The segment covering 334-352 (ASTTASKTEASSVSSVSPA) has biased composition (low complexity).

Belongs to the G-protein coupled receptor 1 family. Opsin subfamily. In terms of processing, phosphorylated on some or all of the serine and threonine residues present in the C-terminal region. Post-translationally, contains one covalently linked retinal chromophore.

It localises to the membrane. The protein resides in the cell projection. It is found in the cilium. Its subcellular location is the photoreceptor outer segment. Its function is as follows. Photoreceptor required for image-forming vision at low light intensity. While most salt water fish species use retinal as chromophore, most freshwater fish use 3-dehydroretinal, or a mixture of retinal and 3-dehydroretinal. Light-induced isomerization of 11-cis to all-trans retinal triggers a conformational change that activates signaling via G-proteins. Subsequent receptor phosphorylation mediates displacement of the bound G-protein alpha subunit by arrestin and terminates signaling. The polypeptide is Rhodopsin (rho) (Psalidodon fasciatus (Banded astyanax)).